Here is a 349-residue protein sequence, read N- to C-terminus: Isopentenyl-diphosphate delta-isomerase (349 aa).

Residue 5-6 coordinates substrate; sequence RK. Residues Ser61, 62-64, Ser92, and Asn120 contribute to the FMN site; that span reads SMT. A substrate-binding site is contributed by 92 to 94; sequence SMR. Residue Gln159 participates in substrate binding. Residue Glu160 coordinates Mg(2+). FMN contacts are provided by residues Lys189, Thr219, 269–271, and 290–291; these read GLR and AR.

It belongs to the IPP isomerase type 2 family. In terms of assembly, homooctamer. Dimer of tetramers. It depends on FMN as a cofactor. NADPH serves as cofactor. Mg(2+) is required as a cofactor.

The protein resides in the cytoplasm. It catalyses the reaction isopentenyl diphosphate = dimethylallyl diphosphate. Its function is as follows. Involved in the biosynthesis of isoprenoids. Catalyzes the 1,3-allylic rearrangement of the homoallylic substrate isopentenyl (IPP) to its allylic isomer, dimethylallyl diphosphate (DMAPP). The polypeptide is Isopentenyl-diphosphate delta-isomerase (Picrophilus torridus (strain ATCC 700027 / DSM 9790 / JCM 10055 / NBRC 100828 / KAW 2/3)).